A 149-amino-acid polypeptide reads, in one-letter code: Calmodulin-3 (149 aa).

An N-acetylalanine modification is found at A2. 4 EF-hand domains span residues 8 to 43 (DQIA…LGQN), 44 to 79 (PTEA…KMKD), 81 to 116 (DSEE…LGEK), and 117 to 149 (LTDE…MMAK). D21, D23, D25, C27, E32, D57, D59, N61, T63, E68, D94, D96, N98, and E105 together coordinate Ca(2+). Position 116 is an N6,N6,N6-trimethyllysine (K116). The Ca(2+) site is built by D130, D132, D134, Q136, and E141.

This sequence belongs to the calmodulin family.

In terms of biological role, calmodulin mediates the control of a large number of enzymes, ion channels and other proteins by Ca(2+). Among the enzymes to be stimulated by the calmodulin-Ca(2+) complex are a number of protein kinases and phosphatases. The chain is Calmodulin-3 (CAM3) from Oryza sativa subsp. indica (Rice).